The sequence spans 436 residues: Protein translocase subunit SecY (436 aa).

A run of 10 helical transmembrane segments spans residues 19-39, 68-88, 116-136, 151-171, 179-199, 216-236, 269-289, 313-333, 372-392, and 395-415; these read ILFT…TVPG, FSVF…VQLL, YISL…FNAL, LFIG…GEQI, GVSM…VKGI, IIFV…TTYV, VIPV…LQFL, GIAM…FVQI, VGSL…DLFG, and DTVA…IEGM.

Belongs to the SecY/SEC61-alpha family. As to quaternary structure, component of the Sec protein translocase complex. Heterotrimer consisting of SecY, SecE and SecG subunits. The heterotrimers can form oligomers, although 1 heterotrimer is thought to be able to translocate proteins. Interacts with the ribosome. Interacts with SecDF, and other proteins may be involved. Interacts with SecA.

Its subcellular location is the cell membrane. The central subunit of the protein translocation channel SecYEG. Consists of two halves formed by TMs 1-5 and 6-10. These two domains form a lateral gate at the front which open onto the bilayer between TMs 2 and 7, and are clamped together by SecE at the back. The channel is closed by both a pore ring composed of hydrophobic SecY resides and a short helix (helix 2A) on the extracellular side of the membrane which forms a plug. The plug probably moves laterally to allow the channel to open. The ring and the pore may move independently. The polypeptide is Protein translocase subunit SecY (Streptococcus gordonii (strain Challis / ATCC 35105 / BCRC 15272 / CH1 / DL1 / V288)).